The chain runs to 137 residues: Protein Flattop homolog (137 aa).

It belongs to the Flattop family.

The protein resides in the cytoplasm. It localises to the cytoskeleton. It is found in the flagellum axoneme. In terms of biological role, microtubule inner protein (MIP) part of the dynein-decorated doublet microtubules (DMTs) in cilia axoneme. Acts as a regulator of cilium basal body docking and positioning in mono- and multiciliated cells. Regulates basal body docking and cilia formation in multiciliated lung cells. Regulates kinocilium positioning and stereocilia bundle morphogenesis in the inner ear. The chain is Protein Flattop homolog from Chlamydomonas reinhardtii (Chlamydomonas smithii).